A 295-amino-acid polypeptide reads, in one-letter code: Defective in cullin neddylation protein 1 (295 aa).

The region spanning 8 to 45 is the UBA-like domain; that stretch reads QKTKLRQFVQWTQVTEAVSLNFLAKANWNIEYAMTLYF. In terms of domain architecture, DCUN1 spans 60–272; sequence VDRSNIERLF…LIDQFVDYCR (213 aa).

As to quaternary structure, interacts with the cullin cul-3. Interacts with ubiquitin via its UBA-like domain. Interacts with ned-8/nedd8.

Its subcellular location is the nucleus. Required for neddylation of cullin components of SCF-type E3 ubiquitin ligase complexes. Neddylation of cullins play an essential role in the regulation of SCF-type complexes activity. Does not act by preventing deneddylation, but rather facilitates neddylation, possibly by acting with rbx-1 to recruit the Nedd8-charged E2 enzyme to the cullin component of SCF-type complexes. The chain is Defective in cullin neddylation protein 1 (dcn-1) from Caenorhabditis elegans.